The chain runs to 364 residues: S-adenosylmethionine:tRNA ribosyltransferase-isomerase (364 aa).

The segment at 344-364 (ASDKMQETSGRGERPRFDHEI) is disordered.

It belongs to the QueA family. As to quaternary structure, monomer.

It is found in the cytoplasm. The enzyme catalyses 7-aminomethyl-7-carbaguanosine(34) in tRNA + S-adenosyl-L-methionine = epoxyqueuosine(34) in tRNA + adenine + L-methionine + 2 H(+). The protein operates within tRNA modification; tRNA-queuosine biosynthesis. Transfers and isomerizes the ribose moiety from AdoMet to the 7-aminomethyl group of 7-deazaguanine (preQ1-tRNA) to give epoxyqueuosine (oQ-tRNA). The protein is S-adenosylmethionine:tRNA ribosyltransferase-isomerase of Thioalkalivibrio sulfidiphilus (strain HL-EbGR7).